Consider the following 149-residue polypeptide: Chromophore lyase CpcS/CpeS homolog (149 aa).

This sequence belongs to the CpcS/CpeS biliprotein lyase family.

It is found in the plastid. Its subcellular location is the chloroplast. Might function to covalently attach a chromophore to Cys residue(s) of phycobiliproteins. The sequence is that of Chromophore lyase CpcS/CpeS homolog from Porphyra purpurea (Red seaweed).